A 335-amino-acid polypeptide reads, in one-letter code: Epidermal differentiation-specific protein (335 aa).

Beta/gamma crystallin 'Greek key' domains are found at residues 2 to 42 (NTIT…KIVG), 43 to 81 (QPWILHQDINYSGQCLPLEEGEYSGISMNDGASSLRLIT), 87 to 126 (PQITVYEHVNGGGKALVLTEETNLAFGNMHDNISSHRVQR), and 127 to 169 (GAWA…YPLR).

It belongs to the beta/gamma-crystallin family. Epidermis specific.

The protein is Epidermal differentiation-specific protein of Cynops pyrrhogaster (Japanese fire-bellied newt).